A 107-amino-acid chain; its full sequence is Antimicrobial peptide microplusin (107 aa).

The first 19 residues, 1-19, serve as a signal peptide directing secretion; the sequence is MKSLLVCLVLAVVVLVASG. Cystine bridges form between C25–C60, C38–C88, and C49–C54. Residues 86–107 form a disordered region; sequence TDCDHSHGHEHSHGHEHGHGHH. Basic and acidic residues predominate over residues 87–107; sequence DCDHSHGHEHSHGHEHGHGHH.

Its subcellular location is the secreted. Functionally, has bacteriostatic activity against Gram-positive bacteria, but not against Gram-negative bacteria. Has fungistatic activity against some but not all fungi. Binds and sequesters copper and iron ions. Copper-chelating is crucial for antimicrobial activity against M.luteus. The protein is Antimicrobial peptide microplusin of Ixodes scapularis (Black-legged tick).